Consider the following 228-residue polypeptide: Urease accessory protein UreE (228 aa).

The interval 188-228 (PLDEPHGSGLHIHAIHSHGDGHSHDHDHSHSHGDHDHDHKH) is disordered. Residues 204 to 228 (SHGDGHSHDHDHSHSHGDHDHDHKH) are compositionally biased toward basic and acidic residues.

Belongs to the UreE family.

The protein resides in the cytoplasm. In terms of biological role, involved in urease metallocenter assembly. Binds nickel. Probably functions as a nickel donor during metallocenter assembly. This chain is Urease accessory protein UreE, found in Yersinia kristensenii.